An 888-amino-acid polypeptide reads, in one-letter code: Villin-like protein quail (888 aa).

One copy of the Gelsolin-like repeat lies at 307–366 (GVYLLDNYGQSIWLWVGGQAPQADALSAMGNGRAFVKKKKYPDNTLVVRVLEGHEPVEFK). The HP domain maps to 823–888 (FDGHKKYPLT…MELKKQFKLF (66 aa)).

The protein belongs to the villin/gelsolin family. Germline specific in adult flies.

Its function is as follows. Required for the formation of cytoplasmic actin filament bundles in nurse cells, possibly by regulating both the polymerization and organization of actin filaments. Mutations in quail result in female sterility due to the disruption of cytoplasmic transport from the nurse cells into the oocyte late in oogenesis. The chain is Villin-like protein quail (qua) from Drosophila melanogaster (Fruit fly).